The primary structure comprises 297 residues: MTDIIPENVNNSKITIICSAPDLASQNIKNHLLNLTEWKNLELPPESRFSAARESIDGKFRLVDIEEIHVFQDGLDRKLEAAGLPASLIIFASKHRSKEEINSLTVHCTGNPSGEARLGGHPKELAVSSPAAMKSILSGMKKLAGEKELKYDVTLEVTHHGPTELSVPSIYAEIGSTEKQWEDPDAGEVAAKSILAVSLEKVPVAVGFGGGHYAMRQTGLLLETKISFGHNFPKYQLEFVDEALVRQAVEKSGAEFAYFDRKSMKSEDRKKISEILEKLGLRVLKESEIRENYGLDD.

This sequence belongs to the DtdA deacylase family. In terms of assembly, monomer. Zn(2+) is required as a cofactor.

The enzyme catalyses a D-aminoacyl-tRNA + H2O = a tRNA + a D-alpha-amino acid + H(+). It catalyses the reaction glycyl-tRNA(Ala) + H2O = tRNA(Ala) + glycine + H(+). D-aminoacyl-tRNA deacylase with broad substrate specificity. By recycling D-aminoacyl-tRNA to D-amino acids and free tRNA molecules, this enzyme counteracts the toxicity associated with the formation of D-aminoacyl-tRNA entities in vivo. This is D-aminoacyl-tRNA deacylase from Methanosarcina mazei (strain ATCC BAA-159 / DSM 3647 / Goe1 / Go1 / JCM 11833 / OCM 88) (Methanosarcina frisia).